The sequence spans 148 residues: Deoxyuridine 5'-triphosphate nucleotidohydrolase (148 aa).

Substrate is bound by residues Arg-67–Gly-69, Asn-80, Leu-84–Asp-86, and Met-94.

The protein belongs to the dUTPase family. Mg(2+) is required as a cofactor.

It catalyses the reaction dUTP + H2O = dUMP + diphosphate + H(+). It functions in the pathway pyrimidine metabolism; dUMP biosynthesis; dUMP from dCTP (dUTP route): step 2/2. Its function is as follows. This enzyme is involved in nucleotide metabolism: it produces dUMP, the immediate precursor of thymidine nucleotides and it decreases the intracellular concentration of dUTP so that uracil cannot be incorporated into DNA. The protein is Deoxyuridine 5'-triphosphate nucleotidohydrolase of Burkholderia mallei (strain NCTC 10247).